Reading from the N-terminus, the 1190-residue chain is Pyruvate-flavodoxin oxidoreductase (1190 aa).

2 consecutive 4Fe-4S ferredoxin-type domains span residues 687-716 and 743-773; these read EIPVWDTDVCIQCGKCVMVCPHSVIRSKVY and FTIQVAAEDCTGCGICVDVCPAKNKAQPRKK. Residues Cys-696, Cys-699, Cys-702, Cys-706, Cys-752, Cys-755, Cys-758, Cys-762, Cys-826, Cys-829, Cys-854, and Cys-1089 each coordinate [4Fe-4S] cluster.

It belongs to the pyruvate:ferredoxin/flavodoxin oxidoreductase family. It depends on [4Fe-4S] cluster as a cofactor.

It catalyses the reaction oxidized [flavodoxin] + pyruvate + CoA + 2 H(+) = reduced [flavodoxin] + acetyl-CoA + CO2. Functionally, oxidoreductase required for the transfer of electrons from pyruvate to flavodoxin, which reduces nitrogenase. The polypeptide is Pyruvate-flavodoxin oxidoreductase (nifJ) (Trichormus variabilis (strain ATCC 29413 / PCC 7937) (Anabaena variabilis)).